The following is a 274-amino-acid chain: Diaminopimelate epimerase (274 aa).

Substrate is bound by residues N11, Q44, and N64. The active-site Proton donor is C73. Residues 74-75, N157, N190, and 208-209 contribute to the substrate site; these read GN and ER. Residue C217 is the Proton acceptor of the active site. 218–219 contacts substrate; the sequence is GS.

This sequence belongs to the diaminopimelate epimerase family. Homodimer.

The protein localises to the cytoplasm. The catalysed reaction is (2S,6S)-2,6-diaminopimelate = meso-2,6-diaminopimelate. It functions in the pathway amino-acid biosynthesis; L-lysine biosynthesis via DAP pathway; DL-2,6-diaminopimelate from LL-2,6-diaminopimelate: step 1/1. Functionally, catalyzes the stereoinversion of LL-2,6-diaminopimelate (L,L-DAP) to meso-diaminopimelate (meso-DAP), a precursor of L-lysine and an essential component of the bacterial peptidoglycan. The sequence is that of Diaminopimelate epimerase from Shigella boydii serotype 18 (strain CDC 3083-94 / BS512).